We begin with the raw amino-acid sequence, 636 residues long: Eukaryotic peptide chain release factor GTP-binding subunit ERF3A (636 aa).

Gly residues-rich tracts occupy residues 1-16 and 103-116; these read MDPS…GGGS and AAGG…GAGG. 2 disordered regions span residues 1–54 and 90–206; these read MDPS…AAVA and LRGP…PPGA. Residues 121–138 show a composition bias toward polar residues; sequence VESSQDQSCEGSNSTVSM. Positions 183–193 are enriched in acidic residues; sequence STQEMMEEEEE. Positions 209–435 constitute a tr-type G domain; it reads KEHVNVVFIG…DNLPNFNRSV (227 aa). The tract at residues 218–225 is G1; that stretch reads GHVDAGKS. 221-226 serves as a coordination point for GTP; the sequence is DAGKST. The interval 274 to 278 is G2; the sequence is GKTVE. Residues 295–298 are G3; the sequence is DAPG. GTP contacts are provided by residues 357–360 and 399–401; these read NKMD and SGL. The interval 357-360 is G4; it reads NKMD. A G5 region spans residues 399–401; it reads SGL.

The protein belongs to the TRAFAC class translation factor GTPase superfamily. Classic translation factor GTPase family. ERF3 subfamily. Component of the eRF1-eRF3-GTP ternary complex, composed of ETF1/ERF1 and ERF3 (GSPT1/ERF3A or GSPT2/ERF3B) and GTP. Component of the transient SURF (SMG1-UPF1-eRF1-eRF3) complex. The ETF1-GSPT1 complex interacts with JMJD4. Interacts with PABPC1. Interacts with SHFL.

The catalysed reaction is GTP + H2O = GDP + phosphate + H(+). GTPase component of the eRF1-eRF3-GTP ternary complex, a ternary complex that mediates translation termination in response to the termination codons UAA, UAG and UGA. GSPT1/ERF3A mediates ETF1/ERF1 delivery to stop codons: The eRF1-eRF3-GTP complex binds to a stop codon in the ribosomal A-site. GTP hydrolysis by GSPT1/ERF3A induces a conformational change that leads to its dissociation, permitting ETF1/ERF1 to accommodate fully in the A-site. Component of the transient SURF complex which recruits UPF1 to stalled ribosomes in the context of nonsense-mediated decay (NMD) of mRNAs containing premature stop codons. Required for SHFL-mediated translation termination which inhibits programmed ribosomal frameshifting (-1PRF) of mRNA from viruses and cellular genes. In Mus musculus (Mouse), this protein is Eukaryotic peptide chain release factor GTP-binding subunit ERF3A (Gspt1).